A 333-amino-acid polypeptide reads, in one-letter code: Putative F-box protein At4g11580 (333 aa).

Residues 11-58 (VSEWADLNKDILELIFNKLDVMDITMGASRVCISWFLASHNKTLWNTV) form the F-box domain.

This chain is Putative F-box protein At4g11580, found in Arabidopsis thaliana (Mouse-ear cress).